The primary structure comprises 534 residues: Probable RNA-binding protein 46 (534 aa).

3 consecutive RRM domains span residues 61–139 (CEVF…VSLD), 141–223 (CRLF…WASP), and 236–308 (KVLY…LAKP).

The protein resides in the cytoplasm. Its function is as follows. Essential for male and female fertility, playing a crucial role in regulating germ cell development by ensuring the proper progression of meiosis prophase I. This Xenopus tropicalis (Western clawed frog) protein is Probable RNA-binding protein 46 (rbm46).